A 294-amino-acid polypeptide reads, in one-letter code: Release factor glutamine methyltransferase (294 aa).

Residues 131–135 (GTGSG), aspartate 154, and asparagine 202 contribute to the S-adenosyl-L-methionine site. 202-205 (NPPY) contributes to the substrate binding site.

This sequence belongs to the protein N5-glutamine methyltransferase family. PrmC subfamily.

The enzyme catalyses L-glutaminyl-[peptide chain release factor] + S-adenosyl-L-methionine = N(5)-methyl-L-glutaminyl-[peptide chain release factor] + S-adenosyl-L-homocysteine + H(+). Methylates the class 1 translation termination release factors RF1/PrfA and RF2/PrfB on the glutamine residue of the universally conserved GGQ motif. This Chlorobaculum tepidum (strain ATCC 49652 / DSM 12025 / NBRC 103806 / TLS) (Chlorobium tepidum) protein is Release factor glutamine methyltransferase.